The chain runs to 474 residues: UDP glycosyltransferase 9 (474 aa).

Residues Ser-296, 349–350 (WC), 367–375 (HCGWNSTLE), and 389–392 (WADQ) each bind UDP-alpha-D-glucose.

The protein belongs to the UDP-glycosyltransferase family.

In Catharanthus roseus (Madagascar periwinkle), this protein is UDP glycosyltransferase 9.